The chain runs to 299 residues: ATP phosphoribosyltransferase (299 aa).

Belongs to the ATP phosphoribosyltransferase family. Long subfamily. In terms of assembly, equilibrium between an active dimeric form, an inactive hexameric form and higher aggregates. Interconversion between the various forms is largely reversible and is influenced by the natural substrates and inhibitors of the enzyme. It depends on Mg(2+) as a cofactor.

Its subcellular location is the cytoplasm. The enzyme catalyses 1-(5-phospho-beta-D-ribosyl)-ATP + diphosphate = 5-phospho-alpha-D-ribose 1-diphosphate + ATP. The protein operates within amino-acid biosynthesis; L-histidine biosynthesis; L-histidine from 5-phospho-alpha-D-ribose 1-diphosphate: step 1/9. With respect to regulation, feedback inhibited by histidine. Catalyzes the condensation of ATP and 5-phosphoribose 1-diphosphate to form N'-(5'-phosphoribosyl)-ATP (PR-ATP). Has a crucial role in the pathway because the rate of histidine biosynthesis seems to be controlled primarily by regulation of HisG enzymatic activity. This chain is ATP phosphoribosyltransferase, found in Salmonella agona (strain SL483).